Reading from the N-terminus, the 29-residue chain is Cytochrome b6-f complex subunit 8 (29 aa).

Residues 3-23 traverse the membrane as a helical segment; sequence IISLGWSSLLVVFTFSLSLVV.

Belongs to the PetN family. In terms of assembly, the 4 large subunits of the cytochrome b6-f complex are cytochrome b6, subunit IV (17 kDa polypeptide, PetD), cytochrome f and the Rieske protein, while the 4 small subunits are PetG, PetL, PetM and PetN. The complex functions as a dimer.

It is found in the plastid. The protein resides in the chloroplast thylakoid membrane. Functionally, component of the cytochrome b6-f complex, which mediates electron transfer between photosystem II (PSII) and photosystem I (PSI), cyclic electron flow around PSI, and state transitions. The sequence is that of Cytochrome b6-f complex subunit 8 from Rhodomonas salina (Cryptomonas salina).